The primary structure comprises 290 residues: Virginiamycin B lyase (290 aa).

H226 is a substrate binding site. Mg(2+) is bound at residue E265. The active-site Proton acceptor is the H267. E282 serves as a coordination point for Mg(2+).

It belongs to the Vgb family. As to quaternary structure, monomer. Mg(2+) is required as a cofactor.

Functionally, inactivates the type B streptogramin antibiotics by linearizing the lactone ring at the ester linkage, generating a free phenylglycine carboxylate and converting the threonyl moiety into 2-amino-butenoic acid. The polypeptide is Virginiamycin B lyase (Mycolicibacterium vanbaalenii (strain DSM 7251 / JCM 13017 / BCRC 16820 / KCTC 9966 / NRRL B-24157 / PYR-1) (Mycobacterium vanbaalenii)).